A 473-amino-acid polypeptide reads, in one-letter code: Reticulon-4 receptor (473 aa).

An N-terminal signal peptide occupies residues 1-26; sequence MKRASAGGSRLLAWVLWLQAWQVAAP. 2 cysteine pairs are disulfide-bonded: Cys27-Cys33 and Cys31-Cys43. An LRRNT domain is found at 27–54; sequence CPGACVCYNEPKVTTSCPQQGLQAVPVG. 9 LRR repeats span residues 55 to 79, 81 to 103, 104 to 128, 129 to 152, 153 to 176, 178 to 200, 202 to 224, 225 to 248, and 250 to 273; these read IPAASQRIFLHGNRISHVPAASFRA, RNLTILWLHSNVLARIDAAAFTG, LALLEQLDLSDNAQLRSVDPATFHG, LGRLHTLHLDRCGLQELGPGLFRG, LAALQYLYLQDNALQALPDDTFRD, GNLTHLFLHGNRISSVPERAFRG, HSLDRLLLHQNRVAHVHPHAFRD, LGRLMTLYLFANNLSALPTEALAP, and RALQYLRLNDNPWVCDCRARPLWA. An N-linked (GlcNAc...) asparagine glycan is attached at Asn82. Residue Asn179 is glycosylated (N-linked (GlcNAc...) asparagine). Residues 260–310 form the LRRCT domain; that stretch reads NPWVCDCRARPLWAWLQKFRGSSSEVPCSLPQRLAGRDLKRLAANDLQGCA. Cystine bridges form between Cys264/Cys287, Cys266/Cys335, and Cys309/Cys336. Residues 346 to 447 form a disordered region; sequence VLEPGRPASA…GGGTGDSEGS (102 aa). Over residues 413–429 the composition is skewed to basic residues; that stretch reads PRRRPGCSRKNRTRSHC. A compositionally biased stretch (gly residues) spans 434–445; sequence AGSGGGGTGDSE. Residue Ser447 is the site of GPI-anchor amidated serine attachment. Positions 448 to 473 are cleaved as a propeptide — removed in mature form; the sequence is GALPSLTCSLTPLGLALVLWTVLGPC.

This sequence belongs to the Nogo receptor family. As to quaternary structure, homodimer. Interacts with MAG. Interacts with RTN4. Interacts with NGFR. Interacts with LINGO1. Interacts with KIAA0319L. Interacts with OLFM1; this inhibits interaction with LINGO1 and NGFR. Interacts with OMG. N-glycosylated. O-glycosylated. Contains terminal sialic acid groups on its glycan chains. In terms of tissue distribution, widespread in the brain but highest levels in the gray matter. Low levels in heart and kidney; not expressed in oligodendrocytes (white matter).

It is found in the cell membrane. It localises to the membrane raft. Its subcellular location is the cell projection. The protein localises to the dendrite. The protein resides in the axon. It is found in the perikaryon. In terms of biological role, receptor for RTN4, OMG and MAG. Functions as a receptor for the sialylated gangliosides GT1b and GM1. Besides, functions as a receptor for chondroitin sulfate proteoglycans. Can also bind heparin. Intracellular signaling cascades are triggered via the coreceptor NGFR. Signaling mediates activation of Rho and downstream reorganization of the actin cytoskeleton. Mediates axonal growth inhibition. Plays a role in regulating axon regeneration and neuronal plasticity in the adult central nervous system. Plays a role in postnatal brain development. Required for normal axon migration across the brain midline and normal formation of the corpus callosum. Protects motoneurons against apoptosis; protection against apoptosis is probably mediated via interaction with MAG. Acts in conjunction with RTN4 and LINGO1 in regulating neuronal precursor cell motility during cortical development. Like other family members, plays a role in restricting the number dendritic spines and the number of synapses that are formed during brain development. The polypeptide is Reticulon-4 receptor (RTN4R) (Homo sapiens (Human)).